The following is a 173-amino-acid chain: Photosystem I assembly protein Ycf3 (173 aa).

3 TPR repeats span residues 35–68 (AFAY…EDDP), 72–105 (SYIL…NPRM), and 120–153 (GEKA…APNN).

It belongs to the Ycf3 family.

The protein resides in the cellular thylakoid membrane. Its function is as follows. Essential for the assembly of the photosystem I (PSI) complex. May act as a chaperone-like factor to guide the assembly of the PSI subunits. In Picosynechococcus sp. (strain ATCC 27264 / PCC 7002 / PR-6) (Agmenellum quadruplicatum), this protein is Photosystem I assembly protein Ycf3.